Here is an 867-residue protein sequence, read N- to C-terminus: Protein melted homolog (867 aa).

A disordered region spans residues methionine 480–threonine 505. The PH domain maps to glutamate 753–alanine 860.

This sequence belongs to the MELT/VEPH family.

Its subcellular location is the cell membrane. In Caenorhabditis briggsae, this protein is Protein melted homolog.